A 102-amino-acid polypeptide reads, in one-letter code: Putative defensin-like protein 298 (102 aa).

Positions 1 to 29 are cleaved as a signal peptide; sequence MSASKATMLILFALFLSDILLVSIPRAEA. 6 disulfide bridges follow: Cys-35/Cys-53, Cys-41/Cys-58, Cys-46/Cys-60, Cys-74/Cys-93, Cys-80/Cys-98, and Cys-86/Cys-100.

This sequence belongs to the DEFL family.

The protein localises to the secreted. The protein is Putative defensin-like protein 298 of Arabidopsis thaliana (Mouse-ear cress).